The chain runs to 83 residues: Kunitz-type serine protease inhibitor nigrescinin-1 (83 aa).

Positions 1–24 (MSSGGLLLLLGLLTLWEALTPVSS) are cleaved as a signal peptide. The region spanning 31–81 (CELPEDSGPCKGLFHVFYYNSDQNQCLEFIYGGCYGNANNFKTIEECKRTC) is the BPTI/Kunitz inhibitor domain. Cystine bridges form between Cys-40–Cys-64 and Cys-56–Cys-77.

Belongs to the venom Kunitz-type family. In terms of tissue distribution, expressed by the venom gland.

It localises to the secreted. Its function is as follows. Serine protease inhibitor. This Cryptophis nigrescens (Eastern small-eyed snake) protein is Kunitz-type serine protease inhibitor nigrescinin-1.